The sequence spans 536 residues: T-complex protein 1 subunit delta (536 aa).

The segment at 1-21 (MAAVAAPMASKPRGSKAESFV) is disordered.

Belongs to the TCP-1 chaperonin family. Heterooligomeric complex of about 850 to 900 kDa that forms two stacked rings, 12 to 16 nm in diameter.

The protein localises to the cytoplasm. Functionally, molecular chaperone; assists the folding of proteins upon ATP hydrolysis. Known to play a role, in vitro, in the folding of actin and tubulin. The protein is T-complex protein 1 subunit delta of Arabidopsis thaliana (Mouse-ear cress).